The primary structure comprises 353 residues: Phosphoribosylformylglycinamidine cyclo-ligase (353 aa).

This sequence belongs to the AIR synthase family.

The protein resides in the cytoplasm. The catalysed reaction is 2-formamido-N(1)-(5-O-phospho-beta-D-ribosyl)acetamidine + ATP = 5-amino-1-(5-phospho-beta-D-ribosyl)imidazole + ADP + phosphate + H(+). It participates in purine metabolism; IMP biosynthesis via de novo pathway; 5-amino-1-(5-phospho-D-ribosyl)imidazole from N(2)-formyl-N(1)-(5-phospho-D-ribosyl)glycinamide: step 2/2. This Magnetococcus marinus (strain ATCC BAA-1437 / JCM 17883 / MC-1) protein is Phosphoribosylformylglycinamidine cyclo-ligase.